Here is a 183-residue protein sequence, read N- to C-terminus: ATP synthase subunit b, chloroplastic (183 aa).

Residues 25–45 traverse the membrane as a helical segment; the sequence is DILATNLINLTVVVGVLIFFG.

It belongs to the ATPase B chain family. As to quaternary structure, F-type ATPases have 2 components, F(1) - the catalytic core - and F(0) - the membrane proton channel. F(1) has five subunits: alpha(3), beta(3), gamma(1), delta(1), epsilon(1). F(0) has four main subunits: a(1), b(1), b'(1) and c(10-14). The alpha and beta chains form an alternating ring which encloses part of the gamma chain. F(1) is attached to F(0) by a central stalk formed by the gamma and epsilon chains, while a peripheral stalk is formed by the delta, b and b' chains.

It localises to the plastid. Its subcellular location is the chloroplast thylakoid membrane. Functionally, f(1)F(0) ATP synthase produces ATP from ADP in the presence of a proton or sodium gradient. F-type ATPases consist of two structural domains, F(1) containing the extramembraneous catalytic core and F(0) containing the membrane proton channel, linked together by a central stalk and a peripheral stalk. During catalysis, ATP synthesis in the catalytic domain of F(1) is coupled via a rotary mechanism of the central stalk subunits to proton translocation. Its function is as follows. Component of the F(0) channel, it forms part of the peripheral stalk, linking F(1) to F(0). This chain is ATP synthase subunit b, chloroplastic, found in Saccharum hybrid (Sugarcane).